A 148-amino-acid chain; its full sequence is Transcriptional regulator MraZ (148 aa).

2 SpoVT-AbrB domains span residues Val5–Glu51 and Ala80–Arg123.

Belongs to the MraZ family. In terms of assembly, forms oligomers.

The protein resides in the cytoplasm. It is found in the nucleoid. The chain is Transcriptional regulator MraZ from Thiobacillus denitrificans (strain ATCC 25259 / T1).